Here is a 290-residue protein sequence, read N- to C-terminus: MAALRALLPRACNSLLSPVRCPEFRRFASGANFQYIITEKKGKNSSVGLIQLNRPKALNALCNGLIEELNQALETFEEDPAVGAIVLTGGEKAFAAGADIKEMQNRTFQDCYSGKFLSHWDHITRIKKPVIAAVNGYALGGGCELAMMCDIIYAGEKAQFGQPEILLGTIPGAGGTQRLTRAVGKSLAMEMVLTGDRISAQDAKQAGLVSKIFPVETLVEEAIQCAEKIANNSKIIVAMAKESVNAAFEMTLTEGNKLEKKLFYSTFATDDRREGMSAFVEKRKANFKDH.

The transit peptide at 1 to 29 (MAALRALLPRACNSLLSPVRCPEFRRFAS) directs the protein to the mitochondrion. Residue 98 to 101 (ADIK) participates in substrate binding. Residues lysine 101 and lysine 115 each carry the N6-acetyllysine; alternate modification. Lysine 101 and lysine 115 each carry N6-succinyllysine; alternate. Position 141 (glycine 141) interacts with substrate. An N6-succinyllysine modification is found at lysine 204. Residue lysine 211 is modified to N6-acetyllysine.

The protein belongs to the enoyl-CoA hydratase/isomerase family. Homohexamer; dimer of trimers. As to expression, detected in liver (at protein level).

It localises to the mitochondrion matrix. It catalyses the reaction a (3S)-3-hydroxyacyl-CoA = a (2E)-enoyl-CoA + H2O. It carries out the reaction a (3E)-enoyl-CoA = a 4-saturated (2E)-enoyl-CoA. The enzyme catalyses (3E)-hexenoyl-CoA = (2E)-hexenoyl-CoA. The catalysed reaction is (3S)-3-hydroxybutanoyl-CoA = (2E)-butenoyl-CoA + H2O. It catalyses the reaction 3-hydroxyisovaleryl-CoA = 3-methylbut-2-enoyl-CoA + H2O. It carries out the reaction 3-hydroxypropanoyl-CoA = acryloyl-CoA + H2O. The enzyme catalyses 3-hydroxybutanoyl-CoA = (2E)-butenoyl-CoA + H2O. The catalysed reaction is 2-methylpropenoyl-CoA + H2O = (S)-3-hydroxyisobutanoyl-CoA. It catalyses the reaction (3S)-hydroxyhexanoyl-CoA = (2E)-hexenoyl-CoA + H2O. It carries out the reaction (3S)-hydroxydecanoyl-CoA = (2E)-decenoyl-CoA + H2O. Its pathway is lipid metabolism; fatty acid beta-oxidation. Converts unsaturated trans-2-enoyl-CoA species ((2E)-enoyl-CoA) to the corresponding 3(S)-3-hydroxyacyl-CoA species through addition of a water molecule to the double bond. Catalyzes the hydration of medium- and short-chained fatty enoyl-CoA thioesters from 4 carbons long (C4) up to C16. Has high substrate specificity for crotonyl-CoA ((2E)-butenoyl-CoA) and moderate specificity for acryloyl-CoA, 3-methylcrotonyl-CoA (3-methyl-(2E)-butenoyl-CoA) and methacrylyl-CoA ((2E)-2-methylpropenoyl-CoA). Can bind tiglyl-CoA (2-methylcrotonoyl-CoA), but hydrates only a small amount of this substrate. Plays a key role in the beta-oxidation spiral of short- and medium-chain fatty acid oxidation. At a lower rate than the hydratase reaction, catalyzes the isomerase reaction of trans-3-enoyl-CoA species (such as (3E)-hexenoyl-CoA) to trans-2-enoyl-CoA species (such as (2E)-hexenoyl-CoA), which are subsequently hydrated to 3(S)-3-hydroxyacyl-CoA species (such as (3S)-hydroxyhexanoyl-CoA). The protein is Enoyl-CoA hydratase, mitochondrial of Rattus norvegicus (Rat).